Consider the following 169-residue polypeptide: NAD(P)H-quinone oxidoreductase subunit J, chloroplastic (169 aa).

Belongs to the complex I 30 kDa subunit family. As to quaternary structure, NDH is composed of at least 16 different subunits, 5 of which are encoded in the nucleus.

It is found in the plastid. Its subcellular location is the chloroplast thylakoid membrane. It catalyses the reaction a plastoquinone + NADH + (n+1) H(+)(in) = a plastoquinol + NAD(+) + n H(+)(out). It carries out the reaction a plastoquinone + NADPH + (n+1) H(+)(in) = a plastoquinol + NADP(+) + n H(+)(out). In terms of biological role, NDH shuttles electrons from NAD(P)H:plastoquinone, via FMN and iron-sulfur (Fe-S) centers, to quinones in the photosynthetic chain and possibly in a chloroplast respiratory chain. The immediate electron acceptor for the enzyme in this species is believed to be plastoquinone. Couples the redox reaction to proton translocation, and thus conserves the redox energy in a proton gradient. In Physcomitrium patens (Spreading-leaved earth moss), this protein is NAD(P)H-quinone oxidoreductase subunit J, chloroplastic.